Consider the following 145-residue polypeptide: MSVSMRLSRGGSKKRPYYKIVVSNSRAPRDGKYLEQVGTYNPLLAKDDENRVRLIEDRVRYWIGVGAQPTDRVARMLDKAGIKERAATNNPQKAEPGKKAKERAEERAEKAREAAEAAAAAAAAPAEEAAAEAPAEAAAEEQTEA.

The interval 82–145 (IKERAATNNP…EAAAEEQTEA (64 aa)) is disordered. The segment covering 95–115 (EPGKKAKERAEERAEKAREAA) has biased composition (basic and acidic residues). Over residues 116 to 137 (EAAAAAAAAPAEEAAAEAPAEA) the composition is skewed to low complexity.

Belongs to the bacterial ribosomal protein bS16 family.

The chain is Small ribosomal subunit protein bS16 from Novosphingobium aromaticivorans (strain ATCC 700278 / DSM 12444 / CCUG 56034 / CIP 105152 / NBRC 16084 / F199).